Reading from the N-terminus, the 86-residue chain is Large ribosomal subunit protein bL27 (86 aa).

A disordered region spans residues 1–31 (MAHKKAGGSSRNGRDSAGQRRGVKKFGGEPV).

It belongs to the bacterial ribosomal protein bL27 family.

This chain is Large ribosomal subunit protein bL27, found in Desulfotalea psychrophila (strain LSv54 / DSM 12343).